The primary structure comprises 426 residues: Vacuole membrane protein hfl11 (426 aa).

Transmembrane regions (helical) follow at residues serine 39–tyrosine 59, isoleucine 73–glutamate 93, glycine 133–valine 153, isoleucine 172–valine 192, and valine 223–leucine 243. At serine 364 the chain carries Phosphoserine. The ATG8-interacting region stretch occupies residues leucine 386–tyrosine 409.

This sequence belongs to the TMEM184 family. As to quaternary structure, interacts with atg8.

The protein resides in the vacuole membrane. Its function is as follows. Vacuole membrane protein that recruits ATG8 to facilitate the degradation of vacuolar integral membrane proteins during early-stationary vacuole turnover (EVT) when cells enter stationary phase. This chain is Vacuole membrane protein hfl11, found in Schizosaccharomyces pombe (strain 972 / ATCC 24843) (Fission yeast).